We begin with the raw amino-acid sequence, 122 residues long: Small ribosomal subunit protein uS13 (122 aa).

Positions 98-122 (VRGQRTHTNARTRKGPAKAIAGKKK) are disordered.

This sequence belongs to the universal ribosomal protein uS13 family. Part of the 30S ribosomal subunit. Forms a loose heterodimer with protein S19. Forms two bridges to the 50S subunit in the 70S ribosome.

Its function is as follows. Located at the top of the head of the 30S subunit, it contacts several helices of the 16S rRNA. In the 70S ribosome it contacts the 23S rRNA (bridge B1a) and protein L5 of the 50S subunit (bridge B1b), connecting the 2 subunits; these bridges are implicated in subunit movement. Contacts the tRNAs in the A and P-sites. This Jannaschia sp. (strain CCS1) protein is Small ribosomal subunit protein uS13.